The sequence spans 193 residues: Signal peptidase I (193 aa).

The Cytoplasmic portion of the chain corresponds to 1-25 (MTEEQKPTSEKSVKRKSNTYWEWGK). The chain crosses the membrane as a helical span at residues 26–42 (AIIIAVALALLIRHFLF). Residues 43–193 (EPYLVEGSSM…FPFHDMRQTK (151 aa)) lie on the Extracellular side of the membrane. Active-site residues include S51 and K93.

Belongs to the peptidase S26 family.

The protein resides in the cell membrane. The enzyme catalyses Cleavage of hydrophobic, N-terminal signal or leader sequences from secreted and periplasmic proteins.. This chain is Signal peptidase I (sipS2), found in Bacillus amyloliquefaciens (Bacillus velezensis).